Here is a 485-residue protein sequence, read N- to C-terminus: Aspartyl/glutamyl-tRNA(Asn/Gln) amidotransferase subunit B (485 aa).

It belongs to the GatB/GatE family. GatB subfamily. As to quaternary structure, heterotrimer of A, B and C subunits.

It catalyses the reaction L-glutamyl-tRNA(Gln) + L-glutamine + ATP + H2O = L-glutaminyl-tRNA(Gln) + L-glutamate + ADP + phosphate + H(+). The enzyme catalyses L-aspartyl-tRNA(Asn) + L-glutamine + ATP + H2O = L-asparaginyl-tRNA(Asn) + L-glutamate + ADP + phosphate + 2 H(+). Its function is as follows. Allows the formation of correctly charged Asn-tRNA(Asn) or Gln-tRNA(Gln) through the transamidation of misacylated Asp-tRNA(Asn) or Glu-tRNA(Gln) in organisms which lack either or both of asparaginyl-tRNA or glutaminyl-tRNA synthetases. The reaction takes place in the presence of glutamine and ATP through an activated phospho-Asp-tRNA(Asn) or phospho-Glu-tRNA(Gln). The polypeptide is Aspartyl/glutamyl-tRNA(Asn/Gln) amidotransferase subunit B (Rhodospirillum rubrum (strain ATCC 11170 / ATH 1.1.1 / DSM 467 / LMG 4362 / NCIMB 8255 / S1)).